Reading from the N-terminus, the 354-residue chain is Guanine nucleotide-binding protein G(o) subunit alpha (354 aa).

Glycine 2 carries the N-myristoyl glycine lipid modification. Residue cysteine 3 is the site of S-palmitoyl cysteine attachment. In terms of domain architecture, G-alpha spans 32-354 (KDIKLLLLGA…ANNLRGCGLY (323 aa)). The segment at 35–48 (KLLLLGAGESGKST) is G1 motif. GTP is bound by residues 40–47 (GAGESGKS), 176–182 (LRTRVKT), 201–205 (DVGGQ), 270–273 (NKKD), and alanine 326. Mg(2+) contacts are provided by serine 47 and threonine 182. Residues 174–182 (DILRTRVKT) form a G2 motif region. Positions 197–206 (FKLFDVGGQR) are G3 motif. Residues 266 to 273 (ILFLNKKD) are G4 motif. Positions 324 to 329 (TCATDT) are G5 motif.

It belongs to the G-alpha family. G(i/o/t/z) subfamily. G proteins are composed of 3 units; alpha, beta and gamma. The alpha chain contains the guanine nucleotide binding site.

Guanine nucleotide-binding proteins (G proteins) are involved as modulators or transducers in various transmembrane signaling systems. The G(o) protein function is not clear. The sequence is that of Guanine nucleotide-binding protein G(o) subunit alpha from Locusta migratoria (Migratory locust).